The primary structure comprises 863 residues: Potassium/sodium hyperpolarization-activated cyclic nucleotide-gated channel 2 (863 aa).

Positions 1–10 (MDARGGGGRP) are enriched in gly residues. The interval 1-131 (MDARGGGGRP…AGPAGEPRGS (131 aa)) is disordered. Residues 1 to 188 (MDARGGGGRP…PYSDFRFYWD (188 aa)) lie on the Cytoplasmic side of the membrane. Pro residues predominate over residues 17–47 (TPAPGPPPPPPPPAPPQPQPPPAPPPNPTTP). Residues 106–128 (GAASGPSAAEEAGSEEAGPAGEP) show a composition bias toward low complexity. Phosphoserine is present on residues Ser-119 and Ser-134. The tract at residues 131 to 182 (SQASFLQRQFGALLQPGVNKFSLRMFGSQKAVEREQERVKSAGAWIIHPYSD) is involved in subunit assembly. A helical transmembrane segment spans residues 189–209 (FTMLLFMVGNLIIIPVGITFF). Residues 210 to 213 (KDET) lie on the Extracellular side of the membrane. A helical transmembrane segment spans residues 214-234 (TAPWIVFNVVSDTFFLMDLVL). Residues 235–261 (NFRTGIVIEDNTEIILDPEKIKKKYLR) lie on the Cytoplasmic side of the membrane. A helical membrane pass occupies residues 262 to 282 (TWFVVDFVSSIPVDYIFLIVE). Residues 283 to 290 (KGIDSEVY) lie on the Extracellular side of the membrane. Residues 291–311 (KTARALRIVRFTKILSLLRLL) traverse the membrane as a helical; Voltage-sensor segment. Residues 312 to 342 (RLSRLIRYIHQWEEIFHMTYDLASAVMRICN) lie on the Cytoplasmic side of the membrane. A helical transmembrane segment spans residues 343 to 363 (LISMMLLLCHWDGCLQFLVPM). Over 364–386 (LQDFPSDCWVSINNMVNHSWSEL) the chain is Extracellular. A glycan (N-linked (GlcNAc...) asparagine) is linked at Asn-380. The segment at residues 387 to 408 (YSFALFKAMSHMLCIGYGRQAP) is an intramembrane region (pore-forming). Residues 409-413 (ESMTD) are Extracellular-facing. The chain crosses the membrane as a helical span at residues 414–434 (IWLTMLSMIVGATCYAMFIGH). Over 435–863 (ATALIQSLDS…SARSRLSSNL (429 aa)) the chain is Cytoplasmic. 6 residues coordinate 3',5'-cyclic AMP: Gly-581, Glu-582, Cys-584, Arg-591, Thr-592, and Arg-632. Ser-641 bears the Phosphoserine; by PKG/PRKG2 mark. Residue Ser-726 is modified to Phosphoserine. An Omega-N-methylarginine modification is found at Arg-728. A disordered region spans residues 730 to 863 (VRRAPPGPLP…SARSRLSSNL (134 aa)). Over residues 734–755 (PPGPLPPAASPGPPAASPPAAP) the composition is skewed to pro residues. Ser-743, Ser-750, and Ser-757 each carry phosphoserine. Low complexity-rich tracts occupy residues 756 to 765 (SSPRAPRTSP), 778 to 800 (PALP…PSLP), and 808 to 834 (PAAS…AAPS). Phosphoserine occurs at positions 840, 842, and 847.

The protein belongs to the potassium channel HCN family. In terms of assembly, homotetramer. The channel is composed of a homo- or heterotetrameric complex of pore-forming subunits. Heterotetramer with HCN1. Forms an obligate 4:4 complex with accessory subunit PEX5L; regulates HCN2 cell-surface expression and cyclic nucleotide dependence. Interacts with KCNE2. Post-translationally, S-palmitoylated. In terms of processing, N-glycosylated; required for cell surface trafficking of HCN2. Phosphorylation at Ser-641 by PRKG2 shifts the voltage-dependence to more negative voltages, hence counteracting the stimulatory effect of cGMP on gating. Highly expressed in brain. Detected at low levels in heart, in ventricle, atrium and in sinoatrial node (SAN).

The protein localises to the cell membrane. The enzyme catalyses Na(+)(in) = Na(+)(out). The catalysed reaction is K(+)(in) = K(+)(out). It catalyses the reaction NH4(+)(in) = NH4(+)(out). Its activity is regulated as follows. Activated by cAMP, and at 10-100 times higher concentrations, also by cGMP. cAMP binding causes a conformation change that leads to the assembly of an active tetramer and channel opening. In the absence of cAMP, the C-terminal region is thought to exert a tonic inhibition on the pore when HCN2 is in a non-tetrameric form. Channel activity is modulated by intracellular chloride ions and pH; acidic pH shifts the activation to more negative voltages. Phosphatidylinositol-4,5- bisphosphate (PIP(2)) acts as a ligand that allosterically opens HCN2 by shifting voltage-dependent channel activation toward depolarized potentials. Inhibited by extracellular cesium ions. Hyperpolarization-activated ion channel exhibiting weak selectivity for potassium over sodium ions. Contributes to the native pacemaker currents in heart (If) and in neurons (Ih). Can also transport ammonium in the distal nephron. Involved in the initiation of neuropathic pain in sensory neurons. This Mus musculus (Mouse) protein is Potassium/sodium hyperpolarization-activated cyclic nucleotide-gated channel 2.